The primary structure comprises 107 residues: Thioredoxin (107 aa).

Positions 2–107 (SVEAVVKQVD…GIRELIQANA (106 aa)) constitute a Thioredoxin domain. Catalysis depends on nucleophile residues Cys-34 and Cys-37. Cys-34 and Cys-37 are oxidised to a cystine.

Belongs to the thioredoxin family.

Its function is as follows. Participates in various redox reactions through the reversible oxidation of its active center dithiol to a disulfide and catalyzes dithiol-disulfide exchange reactions. The chain is Thioredoxin (TRX) from Echinococcus granulosus (Hydatid tapeworm).